The chain runs to 92 residues: MTTKKAYMYVLECADKTLYTGYTTDLKKRLATHNAGKGAKYTRYRLPVSLLYYEVFDSKEAAMSAEALFKKRKTRSQKLAYIATHQKEKKNH.

Residues 4 to 80 (KKAYMYVLEC…KRKTRSQKLA (77 aa)) enclose the GIY-YIG domain.

It belongs to the UPF0213 family.

The sequence is that of UPF0213 protein M28_Spy1146 from Streptococcus pyogenes serotype M28 (strain MGAS6180).